The following is an 885-amino-acid chain: Alanine--tRNA ligase (885 aa).

Residues histidine 572, histidine 576, cysteine 675, and histidine 679 each contribute to the Zn(2+) site.

This sequence belongs to the class-II aminoacyl-tRNA synthetase family. Zn(2+) is required as a cofactor.

Its subcellular location is the cytoplasm. The enzyme catalyses tRNA(Ala) + L-alanine + ATP = L-alanyl-tRNA(Ala) + AMP + diphosphate. Catalyzes the attachment of alanine to tRNA(Ala) in a two-step reaction: alanine is first activated by ATP to form Ala-AMP and then transferred to the acceptor end of tRNA(Ala). Also edits incorrectly charged Ser-tRNA(Ala) and Gly-tRNA(Ala) via its editing domain. This chain is Alanine--tRNA ligase, found in Leifsonia xyli subsp. xyli (strain CTCB07).